A 227-amino-acid chain; its full sequence is Urease subunit gamma/beta (227 aa).

The interval 1–101 (MRLTPTERDR…LAVVTDPIGG (101 aa)) is urease gamma. The interval 102 to 227 (GLGDQAPGAL…ACGYLGVEQR (126 aa)) is urease beta.

The protein in the N-terminal section; belongs to the urease gamma subunit family. This sequence in the C-terminal section; belongs to the urease beta subunit family. In terms of assembly, heterohexamer of 3 UreC (alpha) and 3 UreAB (gamma/beta) subunits.

The protein localises to the cytoplasm. The enzyme catalyses urea + 2 H2O + H(+) = hydrogencarbonate + 2 NH4(+). It participates in nitrogen metabolism; urea degradation; CO(2) and NH(3) from urea (urease route): step 1/1. This chain is Urease subunit gamma/beta, found in Streptomyces avermitilis (strain ATCC 31267 / DSM 46492 / JCM 5070 / NBRC 14893 / NCIMB 12804 / NRRL 8165 / MA-4680).